A 363-amino-acid chain; its full sequence is UDP-N-acetylglucosamine--N-acetylmuramyl-(pentapeptide) pyrophosphoryl-undecaprenol N-acetylglucosamine transferase (363 aa).

UDP-N-acetyl-alpha-D-glucosamine is bound by residues 10-12, Asn124, Arg161, Ser195, and Gln291; that span reads TAG.

This sequence belongs to the glycosyltransferase 28 family. MurG subfamily.

The protein resides in the cell membrane. The catalysed reaction is di-trans,octa-cis-undecaprenyl diphospho-N-acetyl-alpha-D-muramoyl-L-alanyl-D-glutamyl-meso-2,6-diaminopimeloyl-D-alanyl-D-alanine + UDP-N-acetyl-alpha-D-glucosamine = di-trans,octa-cis-undecaprenyl diphospho-[N-acetyl-alpha-D-glucosaminyl-(1-&gt;4)]-N-acetyl-alpha-D-muramoyl-L-alanyl-D-glutamyl-meso-2,6-diaminopimeloyl-D-alanyl-D-alanine + UDP + H(+). It functions in the pathway cell wall biogenesis; peptidoglycan biosynthesis. Its function is as follows. Cell wall formation. Catalyzes the transfer of a GlcNAc subunit on undecaprenyl-pyrophosphoryl-MurNAc-pentapeptide (lipid intermediate I) to form undecaprenyl-pyrophosphoryl-MurNAc-(pentapeptide)GlcNAc (lipid intermediate II). This Streptomyces avermitilis (strain ATCC 31267 / DSM 46492 / JCM 5070 / NBRC 14893 / NCIMB 12804 / NRRL 8165 / MA-4680) protein is UDP-N-acetylglucosamine--N-acetylmuramyl-(pentapeptide) pyrophosphoryl-undecaprenol N-acetylglucosamine transferase.